The following is a 172-amino-acid chain: Large ribosomal subunit protein uL10 (172 aa).

This sequence belongs to the universal ribosomal protein uL10 family. In terms of assembly, part of the ribosomal stalk of the 50S ribosomal subunit. The N-terminus interacts with L11 and the large rRNA to form the base of the stalk. The C-terminus forms an elongated spine to which L12 dimers bind in a sequential fashion forming a multimeric L10(L12)X complex.

Forms part of the ribosomal stalk, playing a central role in the interaction of the ribosome with GTP-bound translation factors. This chain is Large ribosomal subunit protein uL10, found in Methylorubrum extorquens (strain CM4 / NCIMB 13688) (Methylobacterium extorquens).